The chain runs to 299 residues: Zinc finger protein 414 (299 aa).

Polar residues-rich tracts occupy residues 1–20 (MEEL…SSSN) and 70–80 (SCQTSSTTRGV). The tract at residues 1–102 (MEELSGPSSD…PPPGKQIPCS (102 aa)) is disordered. C2H2-type zinc fingers lie at residues 99–123 (IPCS…LRTH) and 135–159 (FRCS…GKLH). Residues 166 to 190 (FKCENCLLRFRTHRSLFKHLHVCID) form a C2H2-type 3; degenerate zinc finger. Disordered stretches follow at residues 193–228 (QNPA…PFPL) and 254–299 (PRLR…GACR). The span at 203–215 (LDKEPPVPERPPE) shows a compositional bias: basic and acidic residues. Over residues 217 to 228 (DPSSSLGLPFPL) the composition is skewed to low complexity. A compositionally biased stretch (polar residues) spans 268–285 (TSSTAIWKKSQGATSSPR).

It belongs to the krueppel C2H2-type zinc-finger protein family.

The protein localises to the nucleus. In terms of biological role, may be involved in transcriptional regulation. The polypeptide is Zinc finger protein 414 (Znf414) (Rattus norvegicus (Rat)).